The sequence spans 308 residues: Olfactory receptor 13H1 (308 aa).

Residues 1–25 (MAMDNVTAVFQFLLIGISNYPQWRD) lie on the Extracellular side of the membrane. N5 carries N-linked (GlcNAc...) asparagine glycosylation. A helical transmembrane segment spans residues 26-46 (TFFTLVLIIYLSTLLGNGFMI). Residues 47–54 (FLIHFDPN) lie on the Cytoplasmic side of the membrane. A helical membrane pass occupies residues 55–75 (LHTPIYFFLSNLSFLDLCYGT). Topologically, residues 76–99 (ASMPQALVHCFSTHPYLSYPRCLA) are extracellular. A disulfide bridge connects residues C97 and C188. Residues 100–120 (QTSVSLALATAECLLLAAMAY) form a helical membrane-spanning segment. Over 121-139 (DRVVAISNPLRYSVVMNGP) the chain is Cytoplasmic. The helical transmembrane segment at 140 to 159 (VCVCLVATSWGTSLVLTAML) threads the bilayer. Over 160-196 (ILSLRLHFCGANVINHFACEILSLIKLTCSDTSLNEF) the chain is Extracellular. A helical transmembrane segment spans residues 197–216 (MILITSIFTLLLPFGFVLLS). Topologically, residues 217-236 (YIRIAMAIIRIRSLQGRLKA) are cytoplasmic. Residues 237 to 257 (FTTCGSHLTVVTIFYGSAISM) traverse the membrane as a helical segment. Topologically, residues 258-270 (YMKTQSKSYPDQD) are extracellular. The helical transmembrane segment at 271-291 (KFISVFYGALTPMLNPLIYSL) threads the bilayer. Residues 292 to 308 (RKKDVKRAIRKVMLKRT) are Cytoplasmic-facing.

Belongs to the G-protein coupled receptor 1 family.

The protein localises to the cell membrane. In terms of biological role, odorant receptor. This chain is Olfactory receptor 13H1 (OR13H1), found in Homo sapiens (Human).